A 129-amino-acid chain; its full sequence is KVFERCELARTLKELGLDGYKGVSLANWLCLTKWESSYNTKATNYNPGSESTDYGIFQINSKFWCNDGKTPNAVDGCHVSCSELMENNIAKAVACAKQIVSEQGITAWVAWKSHCRDHDVSSYVEGCTL.

Residues 1-129 (KVFERCELAR…VSSYVEGCTL (129 aa)) form the C-type lysozyme domain. Disulfide bonds link Cys-6–Cys-127, Cys-30–Cys-115, Cys-65–Cys-81, and Cys-77–Cys-95. Active-site residues include Glu-35 and Asp-53.

Belongs to the glycosyl hydrolase 22 family. As to quaternary structure, monomer.

The catalysed reaction is Hydrolysis of (1-&gt;4)-beta-linkages between N-acetylmuramic acid and N-acetyl-D-glucosamine residues in a peptidoglycan and between N-acetyl-D-glucosamine residues in chitodextrins.. In terms of biological role, lysozymes have primarily a bacteriolytic function; those in tissues and body fluids are associated with the monocyte-macrophage system and enhance the activity of immunoagents. The chain is Lysozyme C-2 from Capra hircus (Goat).